Reading from the N-terminus, the 206-residue chain is Platelet glycoprotein Ib beta chain (206 aa).

Residues Met1 to Cys26 form the signal peptide. Disulfide bonds link Cys26–Cys32 and Cys30–Cys39. The LRRNT domain maps to Pro27–Pro55. Topologically, residues Pro27–Ala150 are extracellular. The stretch at Leu60 to Arg83 is one LRR repeat. The LRRCT domain occupies Asn89–Pro143. Intrachain disulfides connect Cys93–Cys118 and Cys95–Cys141. Residues Leu151 to Leu171 form a helical membrane-spanning segment. At Leu172–Ser206 the chain is on the cytoplasmic side. A Phosphoserine modification is found at Ser186. Residue Ser191 is modified to Phosphoserine; by PKA. Thr193 is modified (phosphothreonine). Ser200 carries the post-translational modification Phosphoserine.

In terms of assembly, two GP-Ib beta are disulfide-linked to one GP-Ib alpha. GP-IX is complexed with the GP-Ib heterodimer via a non covalent linkage. Interacts with TRAF4.

Its subcellular location is the membrane. In terms of biological role, gp-Ib, a surface membrane protein of platelets, participates in the formation of platelet plugs by binding to von Willebrand factor, which is already bound to the subendothelium. In Rattus norvegicus (Rat), this protein is Platelet glycoprotein Ib beta chain (Gp1bb).